We begin with the raw amino-acid sequence, 490 residues long: ATP-dependent 6-phosphofructokinase (490 aa).

Residues Gly109, 175–176, and 200–203 each bind ATP; these read RG and GDGT. Asp201 provides a ligand contact to Mg(2+). Residues 229–231, 274–276, Glu327, and 383–386 contribute to the substrate site; these read TID, MGR, and YMIR. Asp231 (proton acceptor) is an active-site residue. The Peroxisomal targeting signal motif lies at 488–490; that stretch reads SKL.

This sequence belongs to the phosphofructokinase type A (PFKA) family. PPi-dependent PFK group II subfamily. Atypical ATP-dependent clade 'X' sub-subfamily. In terms of assembly, homotetramer. Requires Mg(2+) as cofactor.

It localises to the glycosome. The catalysed reaction is beta-D-fructose 6-phosphate + ATP = beta-D-fructose 1,6-bisphosphate + ADP + H(+). It functions in the pathway carbohydrate degradation; glycolysis; D-glyceraldehyde 3-phosphate and glycerone phosphate from D-glucose: step 3/4. Its activity is regulated as follows. Allosterically activated by AMP. In terms of biological role, catalyzes the phosphorylation of D-fructose 6-phosphate to fructose 1,6-bisphosphate by ATP, the first committing step of glycolysis. This chain is ATP-dependent 6-phosphofructokinase, found in Trypanoplasma borreli.